Here is a 362-residue protein sequence, read N- to C-terminus: Molybdenum import ATP-binding protein ModC (362 aa).

Residues 2–236 (ASPIEVRLQM…LDLPLAMGSD (235 aa)) form the ABC transporter domain. 34-41 (GPSGSGKT) provides a ligand contact to ATP. Residues 297–362 (QSSILNRLPV…AQIKAVAVLA (66 aa)) enclose the Mop domain.

This sequence belongs to the ABC transporter superfamily. Molybdate importer (TC 3.A.1.8) family. The complex is composed of two ATP-binding proteins (ModC), two transmembrane proteins (ModB) and a solute-binding protein (ModA).

It is found in the cell inner membrane. It carries out the reaction molybdate(out) + ATP + H2O = molybdate(in) + ADP + phosphate + H(+). Functionally, part of the ABC transporter complex ModABC involved in molybdenum import. Responsible for energy coupling to the transport system. The sequence is that of Molybdenum import ATP-binding protein ModC from Pseudomonas syringae pv. syringae (strain B728a).